The primary structure comprises 189 residues: Protein Rex (189 aa).

Positions 1–16 (MPKTRRGPRRSQRKRP) are enriched in basic residues. Residues 1-26 (MPKTRRGPRRSQRKRPPTPWPTSQGL) form a disordered region. The short motif at 2–18 (PKTRRGPRRSQRKRPPT) is the Nuclear localization signal, and RNA-binding (RxRE) element. The interval 56 to 70 (RPAYIVTPYWPPVQS) is homomultimerization. Position 70 is a phosphoserine; by host (serine 70). The Nuclear export signal motif lies at 82-93 (LSAQLYSSLSLG). The tract at residues 87–189 (YSSLSLGSPP…PPSPGPSCPR (103 aa)) is disordered. The segment covering 115–125 (IQPPTFHPPSS) has biased composition (pro residues). A homomultimerization region spans residues 123 to 131 (PSSRPYANT). Threonine 174 carries the phosphothreonine; by host modification. Serine 177 is modified (phosphoserine; by host). Residues 178–189 (FPPPSPGPSCPR) show a composition bias toward pro residues.

Belongs to the deltaretrovirus Rex protein family. As to quaternary structure, homomultimer. Multimeric assembly is essential for activity and involves XPO1. Binds to human XPO1 and KPNB1. Interacts (via N-terminal nuclear localization signal) with human NPM1. Phosphorylated.

Its subcellular location is the host nucleus. The protein localises to the host nucleolus. The protein resides in the host cytoplasm. Rex escorts unspliced gag-pro-pol and singly spliced env mRNAs out of the nucleus of infected cells. These mRNAs carry a recognition sequence called Rex responsive element (RxRE or XRE) located at the 3' region of the long terminal repeat (LTR). This function is essential since most HTLV proteins are translated from unspliced or partially spliced pre-mRNAs that cannot exit the nucleus by the pathway used by fully processed cellular mRNAs. Rex itself is translated from a fully spliced mRNA that probably readily exits the nucleus. Rex's nuclear localization signal (NLS) binds directly to KPNB1/importin beta-1 without previous binding to KPNA1/importin alpha-1. KPNB1 binds to the GDP bound form of RAN (Ran-GDP) and targets Rex to the nucleus. In the nucleus, the conversion from Ran-GDP to Ran-GTP dissociates Rex from KPNB1 and allows Rex's binding to the RRE in viral pre-mRNAs. Rex multimerizes on the RRE via cooperative assembly. This multimerization is critical for its full biological activity, since it may shield the viral RNA from being spliced or down-regulated, and probably exposes Rex's nuclear export signal (NES) to the surface. Rex can then form a complex with XPO1/CRM1, RANBP3 and Ran-GTP, leading to nuclear export of the complex. Conversion from Ran-GTP to Ran-GDP mediates dissociation of the Rex/RRE/XPO1/RANBP3/RAN complex, so that Rex can return to the nucleus for a subsequent round of export. This Homo sapiens (Human) protein is Protein Rex.